An 884-amino-acid chain; its full sequence is DNA primase (884 aa).

A CHC2-type zinc finger spans residues 825–864 (CISSNHRNKTQSVRIFIVLYTNKKDEVTITLMSQCFAHKC).

The protein belongs to the herpesviridae DNA primase family. In terms of assembly, associates with the helicase and the primase-associated factor to form the helicase-primase factor.

It localises to the host nucleus. In terms of biological role, essential component of the helicase/primase complex. Unwinds the DNA at the replication forks and generates single-stranded DNA for both leading and lagging strand synthesis. The primase initiates primer synthesis and thereby produces large amount of short RNA primers on the lagging strand that the polymerase elongates using dNTPs. The protein is DNA primase (56) of Equine herpesvirus 2 (strain 86/87) (EHV-2).